Consider the following 209-residue polypeptide: Geminin (209 aa).

Residues methionine 1–glycine 79 form a disordered region. Positions glutamine 7–isoleucine 16 are enriched in basic and acidic residues. Lysine 27 carries the N6-acetyllysine modification. Serine 34, serine 36, serine 49, serine 63, and serine 64 each carry phosphoserine. The segment at threonine 82–glutamate 161 is necessary and sufficient for interaction with IDAS and CDT1. A coiled-coil region spans residues proline 94–valine 144. The interval aspartate 164–isoleucine 209 is disordered. Positions aspartate 170 to glutamate 190 are homeodomain binding. Residues aspartate 170 to glutamate 190 are compositionally biased toward acidic residues. Serine 184 is modified (phosphoserine; by CK2). Residues threonine 198–isoleucine 209 are compositionally biased toward polar residues.

The protein belongs to the geminin family. Homotetramer. Interacts with CDT1; this inhibits binding of the MCM complex to origins of replication. The complex with CDT1 exists in two forms, a 'permissive' heterotrimer and an 'inhibitory' heterohexamer. Interacts (via coiled-coil domain) with IDAS (via coiled-coil domain); this targets GMNN to the nucleus. The heterodimer formed by GMNN and MCIDAS has much lower affinity for CDT1 than the GMNN homodimer. Interacts with a subset of Hox proteins, affinity increasing from anterior to posterior types, the strongest interaction being with HOXB1, HOXC9 and HOXD10. Interacts with LRWD1 from G1/S to mitosis. Phosphorylated during mitosis. Phosphorylation at Ser-184 by CK2 results in enhanced binding to Hox proteins and more potent inhibitory effect on Hox transcriptional activity.

It localises to the cytoplasm. It is found in the nucleus. Inhibits DNA replication by preventing the incorporation of MCM complex into pre-replication complex (pre-RC). It is degraded during the mitotic phase of the cell cycle. Its destruction at the metaphase-anaphase transition permits replication in the succeeding cell cycle. Inhibits histone acetyltransferase activity of KAT7/HBO1 in a CDT1-dependent manner, inhibiting histone H4 acetylation and DNA replication licensing. Inhibits the transcriptional activity of a subset of Hox proteins, enrolling them in cell proliferative control. The chain is Geminin (GMNN) from Homo sapiens (Human).